The following is a 350-amino-acid chain: Bifunctional methylenetetrahydrofolate dehydrogenase/cyclohydrolase, mitochondrial (350 aa).

Residues 1–35 constitute a mitochondrion transit peptide; that stretch reads MAATSLMSALAARLLQPAHSCSLRLRPFHLAAVRN. Lys-50 carries the post-translational modification N6-acetyllysine; alternate. Residue Lys-50 forms a Glycyl lysine isopeptide (Lys-Gly) (interchain with G-Cter in SUMO2); alternate linkage. Substrate contacts are provided by residues 84–88 and 131–133; these read YVLNK and VQL. NAD(+) contacts are provided by residues 200–202 and Arg-233; that span reads GRS. 309 to 313 contacts substrate; that stretch reads PGGVG.

Belongs to the tetrahydrofolate dehydrogenase/cyclohydrolase family. In terms of assembly, homodimer. It depends on Mg(2+) as a cofactor.

The protein resides in the mitochondrion. It catalyses the reaction (6R)-5,10-methylene-5,6,7,8-tetrahydrofolate + NAD(+) = (6R)-5,10-methenyltetrahydrofolate + NADH. The enzyme catalyses (6R)-5,10-methenyltetrahydrofolate + H2O = (6R)-10-formyltetrahydrofolate + H(+). Functionally, although its dehydrogenase activity is NAD-specific, it can also utilize NADP at a reduced efficiency. The sequence is that of Bifunctional methylenetetrahydrofolate dehydrogenase/cyclohydrolase, mitochondrial (MTHFD2) from Homo sapiens (Human).